The sequence spans 161 residues: N5-carboxyaminoimidazole ribonucleotide mutase (161 aa).

Residues Ser9, Asp12, and Arg39 each coordinate substrate.

Belongs to the AIR carboxylase family. Class I subfamily.

The catalysed reaction is 5-carboxyamino-1-(5-phospho-D-ribosyl)imidazole + H(+) = 5-amino-1-(5-phospho-D-ribosyl)imidazole-4-carboxylate. Its pathway is purine metabolism; IMP biosynthesis via de novo pathway; 5-amino-1-(5-phospho-D-ribosyl)imidazole-4-carboxylate from 5-amino-1-(5-phospho-D-ribosyl)imidazole (N5-CAIR route): step 2/2. Its function is as follows. Catalyzes the conversion of N5-carboxyaminoimidazole ribonucleotide (N5-CAIR) to 4-carboxy-5-aminoimidazole ribonucleotide (CAIR). This Vibrio vulnificus (strain CMCP6) protein is N5-carboxyaminoimidazole ribonucleotide mutase.